Consider the following 99-residue polypeptide: MEIAVVGKSEFVVGFRLAGIHKTYEVKNDKDLESKIRECLTDRNLGIIVLHSDDLKHISPGLQKVIDESVEPTFIAIGSKEDAGLRDKIKRAIGVDLWK.

The protein belongs to the V-ATPase F subunit family. As to quaternary structure, has multiple subunits with at least A(3), B(3), C, D, E, F, H, I and proteolipid K(x).

The protein localises to the cell membrane. In terms of biological role, component of the A-type ATP synthase that produces ATP from ADP in the presence of a proton gradient across the membrane. In Methanocella arvoryzae (strain DSM 22066 / NBRC 105507 / MRE50), this protein is A-type ATP synthase subunit F.